The sequence spans 123 residues: MASLRIAPLALFFFLAASVMFTVEKTEAGIPCGESCVFIPCITAAIGCSCKSKVCYRNHVIAAEAKTMDDHHLLCQSHEDCITKGTGNFCAPFPDQDIKYGWCFRAESEGFLLKDHLKMSITN.

Residues 1–28 (MASLRIAPLALFFFLAASVMFTVEKTEA) form the signal peptide. A cross-link (cyclopeptide (Gly-Asn)) is located at residues 29–58 (GIPCGESCVFIPCITAAIGCSCKSKVCYRN). 3 cysteine pairs are disulfide-bonded: Cys-32-Cys-48, Cys-36-Cys-50, and Cys-41-Cys-55. A propeptide spans 59 to 123 (HVIAAEAKTM…KDHLKMSITN (65 aa)) (removed in mature form).

Post-translationally, contains 3 disulfide bonds. This is a cyclic peptide. Expressed in flower, stem, shoot, root, leaf, seed, pod and nodule (at protein level).

Functionally, probably participates in a plant defense mechanism. Active against Gram-negative bacteria E.coli ATCC 700926 (MIC=1.0 uM), K.pneumoniae ATTC 13883 (MIC=5.5 uM) and P.aeruginosa ATCC 39018 (MIC=7.5 uM). Has hemolytic and cytotoxic activity. This chain is Cliotide T4, found in Clitoria ternatea (Butterfly pea).